Reading from the N-terminus, the 467-residue chain is Chromosomal replication initiator protein DnaA (467 aa).

The domain I, interacts with DnaA modulators stretch occupies residues 1 to 85 (MSLSLWQQCL…FEVGAKPASS (85 aa)). A domain II region spans residues 85–130 (SLQKGAVSPAAAAIPAAQVQTARVAPTIVRPGWDNVPAPAEPTYRS). The tract at residues 131-347 (NVNVKHTFDN…GALNRVIANA (217 aa)) is domain III, AAA+ region. 4 residues coordinate ATP: glycine 175, glycine 177, lysine 178, and threonine 179. Residues 348–467 (NFTGRAITID…FSNLIRTLSS (120 aa)) are domain IV, binds dsDNA.

The protein belongs to the DnaA family. Oligomerizes as a right-handed, spiral filament on DNA at oriC.

It is found in the cytoplasm. Functionally, plays an essential role in the initiation and regulation of chromosomal replication. ATP-DnaA binds to the origin of replication (oriC) to initiate formation of the DNA replication initiation complex once per cell cycle. Binds the DnaA box (a 9 base pair repeat at the origin) and separates the double-stranded (ds)DNA. Forms a right-handed helical filament on oriC DNA; dsDNA binds to the exterior of the filament while single-stranded (ss)DNA is stabiized in the filament's interior. The ATP-DnaA-oriC complex binds and stabilizes one strand of the AT-rich DNA unwinding element (DUE), permitting loading of DNA polymerase. After initiation quickly degrades to an ADP-DnaA complex that is not apt for DNA replication. Binds acidic phospholipids. The protein is Chromosomal replication initiator protein DnaA of Klebsiella pneumoniae (strain 342).